Reading from the N-terminus, the 576-residue chain is 5'-nucleotidase (576 aa).

A signal peptide spans 1 to 28 (MRPAAAKVPKWLLLALSALLPQWPAASA). Asp-38 and His-40 together coordinate Zn(2+). An intrachain disulfide couples Cys-53 to Cys-59. Asn-55 carries an N-linked (GlcNAc...) asparagine glycan. Residues Asp-87, Asn-119, His-222, and His-245 each contribute to the Zn(2+) site. Residues Asn-313 and Asn-335 are each glycosylated (N-linked (GlcNAc...) asparagine). 2 disulfide bridges follow: Cys-355/Cys-360 and Cys-367/Cys-389. Residue Arg-356 coordinates AMP. Residue Arg-356 coordinates IMP. AMP-binding residues include Asn-392 and Arg-397. IMP-binding residues include Asn-392 and Arg-397. A glycan (N-linked (GlcNAc...) asparagine) is linked at Asn-405. Position 419 (Phe-419) interacts with AMP. Phe-419 is an IMP binding site. A disulfide bond links Cys-478 and Cys-481. AMP is bound by residues Tyr-502 and Asp-508. IMP-binding residues include Tyr-502 and Asp-508. Ser-551 carries the GPI-anchor amidated serine lipid modification. Positions 552-576 (AASHYQGSFPLVILSFWAMILILYQ) are cleaved as a propeptide — removed in mature form.

It belongs to the 5'-nucleotidase family. As to quaternary structure, homodimer. It depends on Zn(2+) as a cofactor. Expressed at high levels in the placenta, kidney, lung and stomach and at lower levels in the thymus, spleen, skeletal muscle and esophagus.

The protein localises to the cell membrane. The enzyme catalyses a ribonucleoside 5'-phosphate + H2O = a ribonucleoside + phosphate. It carries out the reaction a 2'-deoxyribonucleoside 5'-phosphate + H2O = a 2'-deoxyribonucleoside + phosphate. The catalysed reaction is dTMP + H2O = thymidine + phosphate. It catalyses the reaction CMP + H2O = cytidine + phosphate. The enzyme catalyses IMP + H2O = inosine + phosphate. It carries out the reaction AMP + H2O = adenosine + phosphate. The catalysed reaction is GMP + H2O = guanosine + phosphate. It catalyses the reaction UMP + H2O = uridine + phosphate. The enzyme catalyses dAMP + H2O = 2'-deoxyadenosine + phosphate. It carries out the reaction dCMP + H2O = 2'-deoxycytidine + phosphate. Catalyzes the hydrolysis of nucleotide monophosphates, releasing inorganic phosphate and the corresponding nucleoside. Hydrolyzes IMP. Shows a preference for ribonucleotide monophosphates over their equivalent deoxyribose forms. Although AMP is the preferred substrate can also hydrolyze UMP, GMP, CMP, dAMP, dCMP, dTMP, NAD and NMN. The sequence is that of 5'-nucleotidase (Nt5e) from Mus musculus (Mouse).